We begin with the raw amino-acid sequence, 553 residues long: Zinc finger protein 426 (553 aa).

Residues 40 to 111 form the KRAB domain; sequence VSFDDVIVDF…KIVFPEWKIQ (72 aa). 11 C2H2-type zinc fingers span residues 222 to 244, 277 to 299, 305 to 327, 333 to 355, 361 to 383, 389 to 411, 417 to 439, 445 to 467, 473 to 495, 501 to 525, and 531 to 553; these read FECS…QRTH, HRCK…MRTH, YECK…GRTH, YVCN…VRSH, YACK…IRTH, FVCV…LKMH, CECK…MRTH, YTCK…MRIH, YECK…ERTH, YECK…SHTH, and YKCQ…ERIH.

The protein resides in the nucleus. In terms of biological role, may be involved in transcriptional regulation. The sequence is that of Zinc finger protein 426 (Znf426) from Rattus norvegicus (Rat).